A 281-amino-acid chain; its full sequence is Tryptophan 2,3-dioxygenase (281 aa).

Residues 50-54, Y112, and R116 contribute to the substrate site; that span reads FIIQH. H239 lines the heme pocket. T253 serves as a coordination point for substrate.

Belongs to the tryptophan 2,3-dioxygenase family. In terms of assembly, homotetramer. The cofactor is heme.

The enzyme catalyses L-tryptophan + O2 = N-formyl-L-kynurenine. It participates in amino-acid degradation; L-tryptophan degradation via kynurenine pathway; L-kynurenine from L-tryptophan: step 1/2. Functionally, heme-dependent dioxygenase that catalyzes the oxidative cleavage of the L-tryptophan (L-Trp) pyrrole ring and converts L-tryptophan to N-formyl-L-kynurenine. Catalyzes the oxidative cleavage of the indole moiety. This chain is Tryptophan 2,3-dioxygenase, found in Saccharopolyspora erythraea (strain ATCC 11635 / DSM 40517 / JCM 4748 / NBRC 13426 / NCIMB 8594 / NRRL 2338).